A 989-amino-acid polypeptide reads, in one-letter code: Serine-repeat antigen protein 5 (989 aa).

The N-terminal stretch at 1-16 (MKSYISLFFILCVIFN) is a signal peptide. 2 disordered regions span residues 26–91 (SQTG…EKQD) and 165–245 (LPSN…RNLQ). Low complexity-rich tracts occupy residues 52 to 87 (QGST…STSS), 167 to 180 (SNGT…STGT), and 191 to 225 (SSSS…SSSS). A Phosphoserine modification is found at S167. N-linked (GlcNAc...) asparagine glycosylation is present at N168. The segment at 208 to 245 (SSSSSSSSSSSSSSSSSSESLPANGPDSPTVKPPRNLQ) is interaction with PTKL. Residue N310 is glycosylated (N-linked (GlcNAc...) asparagine). The tract at residues 365–382 (YKYLSEDIVSNFKEIKAE) is interaction with host VTN. A disulfide bond links C437 and C489. A Phosphothreonine modification is found at T541. Disulfide bonds link C559–C564, C573–C602, C585–C628, C619–C664, and C747–C801. Positions 571-989 (NNCISNLQVE…TNNECYFCYV (419 aa)) are thiol-protease-like. Active-site residues include H754 and N779. N820 carries N-linked (GlcNAc...) asparagine glycosylation. Positions 835 to 878 (KASPEFYHNLYFKNFNVGKKNLFSEKEDNENNKKLGNNYIIFGQ) are cleaved as a propeptide — inhibition peptide. S858 is subject to Phosphoserine.

The protein belongs to the peptidase C1 family. May interact (via C-terminus) with PTKL (via SAM domain). As to quaternary structure, interacts (via C-terminus) with human VTN (via hemopexin repeat 2); may form heterotetramers of two VTN and SERA5 P47 heterodimers; the interaction may protect merozoites from phagocytosis by host monocytes; VTN glycosylation appears to be dispensable for the interaction. In terms of assembly, monomer. Interacts with kinase CPK1/CDPK1 at the schizont stage. Phosphorylation by CPK1/CDPK1 increases SERA5 protease activity towards a synthetic peptide in vitro. In terms of processing, just prior to merozoite egress from host erythrocytes, proteolytically cleaved into multiple fragments. Cleaved by SUB1 into p47 and p73, p73 is further cleaved by SUB1 into p56 and p18 and p56 is further processed into p50 by an unidentified protease. p47 remains covalently associated with p18 via disulfide bond. p47 can be processed into p25n and p25c by SUB1. p25c and p25n remain associated with p18. Proteolytic processing is essential for merozoite egress from host erythrocytes. The cleavage of the propeptide to produce p50 is necessary for protease activity and to promote merozoite egress.

The protein resides in the parasitophorous vacuole. The protein localises to the secreted. Its subcellular location is the cell membrane. Plays an essential role during the asexual blood stage development by controlling the kinetics of merozoite egress from host erythrocytes. Specifically, prevents premature rupture of the parasitophorous vacuole and host erythrocyte membranes. Functionally, may prevent merozoite phagocytosis by host monocytes via interaction with host VTN at the merozoite surface. Plays a role in parasite growth. Its function is as follows. Protease activity is controversial. In Plasmodium falciparum (isolate CDC / Honduras), this protein is Serine-repeat antigen protein 5.